We begin with the raw amino-acid sequence, 488 residues long: ATP synthase subunit beta (488 aa).

An ATP-binding site is contributed by 164 to 171 (GGAGVGKT).

This sequence belongs to the ATPase alpha/beta chains family. As to quaternary structure, F-type ATPases have 2 components, CF(1) - the catalytic core - and CF(0) - the membrane proton channel. CF(1) has five subunits: alpha(3), beta(3), gamma(1), delta(1), epsilon(1). CF(0) has four main subunits: a(1), b(1), b'(1) and c(9-12).

Its subcellular location is the cellular thylakoid membrane. The enzyme catalyses ATP + H2O + 4 H(+)(in) = ADP + phosphate + 5 H(+)(out). Functionally, produces ATP from ADP in the presence of a proton gradient across the membrane. The catalytic sites are hosted primarily by the beta subunits. The chain is ATP synthase subunit beta from Prochlorococcus marinus (strain NATL2A).